Consider the following 365-residue polypeptide: Eukaryotic translation initiation factor 3 subunit H (365 aa).

One can recognise an MPN domain in the interval Val-11–Phe-160. Residues Tyr-273–Gln-303 are a coiled coil.

The protein belongs to the eIF-3 subunit H family. As to quaternary structure, component of the eukaryotic translation initiation factor 3 (eIF-3) complex.

Its subcellular location is the cytoplasm. Its function is as follows. Component of the eukaryotic translation initiation factor 3 (eIF-3) complex, which is involved in protein synthesis of a specialized repertoire of mRNAs and, together with other initiation factors, stimulates binding of mRNA and methionyl-tRNAi to the 40S ribosome. The eIF-3 complex specifically targets and initiates translation of a subset of mRNAs involved in cell proliferation. The protein is Eukaryotic translation initiation factor 3 subunit H of Coccidioides immitis (strain RS) (Valley fever fungus).